The chain runs to 15281 residues: Cyclosporin synthetase simA (15281 aa).

Residues 34–463 (SFAQGRLWFL…AVHVKTMPLT (430 aa)) form a condensation 1 region. The segment at 513–918 (SYSELDHKSD…NSDQVRDAAV (406 aa)) is adenylation 1. Residues 1026 to 1100 (APRNEIEAVL…DLAATIQRGS (75 aa)) enclose the Carrier 1 domain. Position 1060 is an O-(pantetheine 4'-phosphoryl)serine (S1060). The condensation 2 stretch occupies residues 1118 to 1549 (SFAQGRLWFL…QTPIMTMPLT (432 aa)). The adenylation 2 stretch occupies residues 1599 to 2004 (SYAELDQRSD…SSAGVHDAVV (406 aa)). The segment at 2067–2251 (SWTSMYDGTL…LEELEEELLV (185 aa)) is methyltransferase (M) domain 1. Positions 2524 to 2598 (APRDSIEAII…DLAATIQQDT (75 aa)) constitute a Carrier 2 domain. S2558 carries the O-(pantetheine 4'-phosphoryl)serine modification. The tract at residues 2616–3044 (SFAQGRLWFL…EPDMPVASMA (429 aa)) is condensation 3. Positions 3096 to 3498 (SYADLDRKSD…SHDLVTDAAV (403 aa)) are adenylation 3. Residues 3562-3749 (SMYDGSLIKK…EDELLVDPAF (188 aa)) form a methyltransferase (M) domain 2 region. Positions 4011–4085 (APRTEIERVL…DLVLIVQQGS (75 aa)) constitute a Carrier 3 domain. The residue at position 4045 (S4045) is an O-(pantetheine 4'-phosphoryl)serine. Positions 4100–4530 (VPQSFAQGRL…GPDVPISTLP (431 aa)) are condensation 4. The adenylation 4 stretch occupies residues 4582-4986 (SYAQLDRESD…FLNDGFVEDV (405 aa)). The segment at 5052-5241 (TSMYDGTEID…ELLVDPAFFT (190 aa)) is methyltransferase (M) domain 3. Positions 5503 to 5577 (PPRNSVEATV…DLAAVIQRNS (75 aa)) constitute a Carrier 4 domain. O-(pantetheine 4'-phosphoryl)serine is present on S5537. The segment at 5592–6023 (VPQSFAQGRL…QPLTPLAVLP (432 aa)) is condensation 5. Residues 6075–6478 (TYAQLDQQSD…SHNSVQDAAV (404 aa)) are adenylation 5. Residues 6545-6729 (WTSMYDGSEI…ELEANEEELL (185 aa)) are methyltransferase (M) domain 4. The region spanning 7000-7074 (APRNEIEAIL…DLAASIQRES (75 aa)) is the Carrier 5 domain. Residue S7034 is modified to O-(pantetheine 4'-phosphoryl)serine. The tract at residues 7092–7517 (SFAQGRLWFL…VLDQPLTPIS (426 aa)) is condensation 6. The adenylation 6 stretch occupies residues 7572–7976 (TYAQLDEQSD…DHKSVLAATV (405 aa)). The 75-residue stretch at 8060 to 8134 (PPRDEVEAVL…DLADIIRRGS (75 aa)) folds into the Carrier 6 domain. At S8094 the chain carries O-(pantetheine 4'-phosphoryl)serine. The interval 8152 to 8582 (SFAQGRLWFL…PKQRLMAMPI (431 aa)) is condensation 7. Positions 8633 to 9038 (TYADLDGQSN…GHDLVHDAAV (406 aa)) are adenylation 7. The segment at 9111–9288 (PVNEMKEWLD…EESEEELLVD (178 aa)) is methyltransferase (M) domain 5. The 75-residue stretch at 9555 to 9629 (APRNDTEIVL…DLAASIEQGS (75 aa)) folds into the Carrier 7 domain. The residue at position 9589 (S9589) is an O-(pantetheine 4'-phosphoryl)serine. A condensation 8 region spans residues 9647 to 10077 (SYAQGRLWFL…QVSISTMPLT (431 aa)). An adenylation 8 region spans residues 10127-10529 (SYTSLDQKSE…GNKAIHDAAV (403 aa)). Positions 10588–10768 (RDFTSWTSMY…DQIRQEVARL (181 aa)) are methyltransferase (M) domain 6. The region spanning 11052-11126 (APRNDIEAVL…DLADVVQTGS (75 aa)) is the Carrier 8 domain. The residue at position 11086 (S11086) is an O-(pantetheine 4'-phosphoryl)serine. Residues 11144-11567 (SFSQGRLWFL…HANLATLPLT (424 aa)) form a condensation 9 region. Residues 11616 to 12019 (TYTELDERSS…RDPAISDSAV (404 aa)) are adenylation 9. The region spanning 12124 to 12198 (APRNDIETII…QLAASIQQGS (75 aa)) is the Carrier 9 domain. S12158 is subject to O-(pantetheine 4'-phosphoryl)serine. The segment at 12216–12645 (SFAQGRLWFL…IAISTMPLVD (430 aa)) is condensation 10. The adenylation 10 stretch occupies residues 12696–13096 (TYAELDQQSD…SDSSINDAVV (401 aa)). The segment at 13162 to 13343 (YDGSLIPREE…EDDEEELLVD (182 aa)) is methyltransferase (M) domain 7. In terms of domain architecture, Carrier 10 spans 13620 to 13694 (APRTEIEVVL…DLAASILQGS (75 aa)). S13654 is subject to O-(pantetheine 4'-phosphoryl)serine. The condensation 11 stretch occupies residues 13710–14143 (EQSFAQGRLW…PQSPIATMPL (434 aa)). The segment at 14194-14598 (TYAELDRLSD…SENSVTDAAV (405 aa)) is adenylation 11. Positions 14695–14769 (APRNETEAAI…SLAGKLEQQQ (75 aa)) constitute a Carrier 11 domain. O-(pantetheine 4'-phosphoryl)serine is present on S14729. Residues 14814–15158 (DMYPATQTQI…HPEAEIEGQQ (345 aa)) form a condensation 12 region. The disordered stretch occupies residues 15169–15224 (QARQANGHAPNGTNGTNGTNGTNGANGTNGTNGTNGTHANGINGSNGVNGRDSNVV). Residues 15173–15211 (ANGHAPNGTNGTNGTNGTNGANGTNGTNGTNGTHANGIN) show a composition bias toward low complexity. Residues 15213–15224 (SNGVNGRDSNVV) show a composition bias toward polar residues.

This sequence belongs to the NRP synthetase family. The cofactor is pantetheine 4'-phosphate.

Its function is as follows. Nonribosomal peptide synthetase; part of the gene cluster that mediates the biosynthesis of the cycloundecapeptide cyclosporin A (CsA), a compound with antifungal activity used as an immunosuppressant drug. Cyclosporin A contains three non-proteinogenic amino acids: D-alanine, alpha-amino butyric acid and the unusual amino acid (4R)-4-[(E)-2-butenyl]-4-methyl-l-threonine (Bmt). The nonribosomal peptide synthetase (NRPS) catalyzes the elongation and cyclization of the undecapeptide chain. SimA contains 11 modules responsible for sequential uptake of substrates and chain elongation. In addition to the core condensation-adenylation-thiolation (C-A-T) domains present in each module, seven modules contain an additional N-methylation (M) domain (modules 2, 3, 4, 5, 7, 8, and 10). The terminal C domain (C12 or Ct) is implicated in cyclization of the peptidyl chains to form CsA. The first module (A1) takes up D-Ala which is provided by the alanine racemase simB. The A2, A3, A8, and A10 domains have the same substrate-specific signature for recognition of leucine residues. The unusual amino acid (4R)-4-[(E)-2-butenyl]-4-methyl-l-threonine (Bmt) is recognized by the fifth module (A5). The A11 domain recognizes L-Ala. The PKS simG mediates the biosynthesis of 3R-hydroxyl-4R-methyl-6E-octenoic acid from acetyl coenzyme A (acetyl-CoA), malonyl-CoA, and S-adenosylmethionine, and 3R-hydroxyl-4R-methyl-6E-octenoic acid is then be repeatedly oxidized by simI to 3R-hydroxy-4R-methyl-2-keto-6E-octenoic acid. The latter is likely converted to Bmt through the action of the aminotransferase SimJ. The chain is Cyclosporin synthetase simA from Tolypocladium inflatum (Cyclosporin fungus).